We begin with the raw amino-acid sequence, 579 residues long: MPALGEILLVPETDKGKSKDYIEVSEDEKITRTRSRSLKKKAIKASNKLTHSLRKRGKRVADQYAPIVIEDVRDEEEEKAVNVFRKALVSLDLLPPRHDDYHTMLRFLKARRFDLEKTVQMWEEMLKWRKENGVDTIIQDFVYDEYEEVQQYYPHGYHGVDREGRPVYIERLGKIDPGKLMKVTTLERFLRYHVQGFEKTFSEKFPACSIAAKRHINSSTTIIDVHGVSWMSFRKLAQDLVMRMQKIDGDNYPETLNQMYIINAGNGFKLVWNTVKGFLDPKTTSKIHVLGNKYRSHLLEIIDPSELPEFLGGNCKCAHEGGCMRFNKGPWNDPEIMKLVRSRDAMYKPKEMGLLENGEVAKLFSLRHVNTDMSSPDGGHVRERESHPEHDKRAQLSNQAEAVGVGRMEQSDSTSPLPNNLAVERSLTTSLQKVASFLARFILQLLGSLCLMFRILGRLVNKQPENQLRPELSVSVSQQQVPPPQVHPCWLRLQNLETMVTVLCDKPSSIPQEKEDILRDSLDRIKSIEQDLQKTKKALFLTASKQIELAECFENLKESSSTGMRSCWPRHCRNFQAET.

The CRAL-TRIO domain occupies 145 to 319; that stretch reads EYEEVQQYYP…FLGGNCKCAH (175 aa). The tract at residues 372–419 is disordered; the sequence is DMSSPDGGHVRERESHPEHDKRAQLSNQAEAVGVGRMEQSDSTSPLPN. A compositionally biased stretch (basic and acidic residues) spans 379-394; sequence GHVRERESHPEHDKRA. Positions 512–539 form a coiled coil; it reads QEKEDILRDSLDRIKSIEQDLQKTKKAL.

Belongs to the SFH family.

The protein localises to the golgi apparatus membrane. Its subcellular location is the cell membrane. Functionally, required for transport of secretory proteins from the Golgi complex. Catalyzes the transfer of phosphatidylinositol and phosphatidylcholine between membranes in vitro. The sequence is that of Phosphatidylinositol/phosphatidylcholine transfer protein SFH9 (SFH9) from Arabidopsis thaliana (Mouse-ear cress).